We begin with the raw amino-acid sequence, 107 residues long: Small ribosomal subunit protein bS6 (107 aa).

Belongs to the bacterial ribosomal protein bS6 family.

Functionally, binds together with bS18 to 16S ribosomal RNA. This Synechococcus elongatus (strain ATCC 33912 / PCC 7942 / FACHB-805) (Anacystis nidulans R2) protein is Small ribosomal subunit protein bS6.